Here is a 216-residue protein sequence, read N- to C-terminus: MSELVMDSAFFGHVLQDMGALIEKERDYLTGLDSDIGDGDHGINLSIGFREVNKQLDELLTVSPDIATLLKKSGMILLGKVGGASGPLYGSFFMKCGADVPGKTEVNFDELCGMIINGAAAVQHRGKAELGDKTMMDAFLPGVEVLQNRDTNADPIETFSAFVDAMHAGAQSTIPLIAKKGRALRLGERAIGHLDPGSESSWMLMNVILENLKKAV.

Residues 9–210 (AFFGHVLQDM…SWMLMNVILE (202 aa)) form the DhaL domain. Mg(2+) is bound by residues aspartate 33, aspartate 38, and aspartate 40. ADP-binding positions include 41-44 (HGIN), 84-85 (AS), glycine 126, methionine 135, arginine 182, and 195-197 (DPG).

In terms of assembly, homodimer. The dihydroxyacetone kinase complex is composed of a homodimer of DhaM, a homodimer of DhaK and the subunit DhaL. Mg(2+) is required as a cofactor.

The protein localises to the cytoplasm. The enzyme catalyses dihydroxyacetone + phosphoenolpyruvate = dihydroxyacetone phosphate + pyruvate. It functions in the pathway polyol metabolism; glycerol degradation. In terms of biological role, ADP-binding subunit of the dihydroxyacetone kinase, which is responsible for the phosphoenolpyruvate (PEP)-dependent phosphorylation of dihydroxyacetone. DhaL-ADP is converted to DhaL-ATP via a phosphoryl group transfer from DhaM and transmits it to dihydroxyacetone binds to DhaK. The polypeptide is PEP-dependent dihydroxyacetone kinase 2, ADP-binding subunit DhaL (Listeria innocua serovar 6a (strain ATCC BAA-680 / CLIP 11262)).